A 656-amino-acid polypeptide reads, in one-letter code: MRRAVGFPALCLLLNLHAAGCFSRNNDHFLAIRQKKSWKPMFIYDHSQDIKKSLDIAQEAYKHNYPAPSEVQISKRHQIVDSAFPRPAYDPSLNLLAASGQDLEIENLPIPAANVIVVTLQMDIDKLNITLLRIFRQGVAAALGLLPQQVHINRLIEKKSQIELFVSPGNRKPGEPQALQAEEVLRSLNVDVLRQSLPQFGSIDVSPEKNVLQGQHEADKIWSKEGFYAVVIFLSIFIIIVTCLMIIYRLKERLQLSFRQDKEKNQEIHLSPIALQQAQSEAKAAHSMVQPDQAPKVLNVVVDPQGQCTPEIRNTASTSVCPSPFRMKPIGLQERRGSNVSLTLDMSSLGNVEPFVAVSTPREKVAMEYLQSASRVLTSPQLRDVVASSHLLQSEFMEIPMNFVDPKEIDIPRHGTKNRYKTILPNPLSRVCLRPKNITDPLSTYINANYIRGYSGKEKAFIATQGPMINTVNDFWQMVWQEDSPVIVMITKLKEKNEKCVLYWPEKRGIYGKVEVLVIGVNECDNYTIRNLVLKRGSHTQHVKHYWYTSWPDHKTPDSAQPLLQLMLDVEEDRLASEGRGPVVVHCSAGIGRTGCFIATSIGCQQLKEEGVVDALSIVCQLRVDRGGMVQTSEQYEFVHHALCLFESRLSPETVQ.

An N-terminal signal peptide occupies residues 1-23 (MRRAVGFPALCLLLNLHAAGCFS). O-linked (Xyl...) (chondroitin sulfate) serine glycosylation occurs at Ser23. The Extracellular portion of the chain corresponds to 25-225 (NNDHFLAIRQ…HEADKIWSKE (201 aa)). Asn128 is a glycosylation site (N-linked (GlcNAc...) asparagine). The chain crosses the membrane as a helical span at residues 226-248 (GFYAVVIFLSIFIIIVTCLMIIY). Over 249–656 (RLKERLQLSF…ESRLSPETVQ (408 aa)) the chain is Cytoplasmic. Residue Ser271 is modified to Phosphoserine. Ser338 is modified (phosphoserine; by PKA). The 255-residue stretch at 392–646 (LQSEFMEIPM…EFVHHALCLF (255 aa)) folds into the Tyrosine-protein phosphatase domain. Substrate-binding positions include Asp553, 587–593 (CSAGIGR), and Gln631. The Phosphocysteine intermediate role is filled by Cys587.

It belongs to the protein-tyrosine phosphatase family. Receptor class 7 subfamily. In terms of assembly, interacts with MAPKs. Widely expressed in the brain, most abundant in cerebellum, midbrain, cerebral cortex and hippocampus. Also expressed in heart and skeletal muscle.

The protein localises to the cytoplasm. It is found in the cell membrane. The catalysed reaction is O-phospho-L-tyrosyl-[protein] + H2O = L-tyrosyl-[protein] + phosphate. Sequesters mitogen-activated protein kinases (MAPKs) such as MAPK1, MAPK3 and MAPK14 in the cytoplasm in an inactive form. The MAPKs bind to a dephosphorylated kinase interacting motif, phosphorylation of which by the protein kinase A complex releases the MAPKs for activation and translocation into the nucleus. In Rattus norvegicus (Rat), this protein is Receptor-type tyrosine-protein phosphatase R (Ptprr).